We begin with the raw amino-acid sequence, 711 residues long: Ferric reductase transmembrane component 3 (711 aa).

A signal peptide spans 1–20 (MYWVLLCGSILLCCLSGASA). The Extracellular segment spans residues 21–166 (SPAKTKMYGK…YANYDIGHTY (146 aa)). Residues asparagine 85, asparagine 108, asparagine 120, and asparagine 134 are each glycosylated (N-linked (GlcNAc...) asparagine). A helical membrane pass occupies residues 167-187 (GGIICAYFVGVMILASILHYL). Residues 188–237 (SYTPFKTALFKQRLVRYVRRYLTIPTIWGKHASSFSYLKIFTGFLPTRSE) lie on the Cytoplasmic side of the membrane. Residues 238–258 (GVIILGYLVLHTVFLAYGYQY) traverse the membrane as a helical segment. At 259-280 (DPYNLIFDSRREQIARYVADRS) the chain is on the extracellular side. Residues 280-414 (SGVLAFAHFP…SGIEWIYAAI (135 aa)) enclose the Ferric oxidoreductase domain. Residues 281–301 (GVLAFAHFPLIALFAGRNNFL) traverse the membrane as a helical segment. Topologically, residues 302–321 (EFISGVKYTSFIMFHKWLGR) are cytoplasmic. Residues histidine 316 and histidine 330 each contribute to the heme site. Residues 322-341 (MMFLDAVIHGAAYTSYSVFY) traverse the membrane as a helical segment. The Extracellular portion of the chain corresponds to 342–353 (KDWAASKEETYW). Residues 354-374 (QFGVAALCIVGVMVFFSLAMF) form a helical membrane-spanning segment. Over 375–376 (RK) the chain is Cytoplasmic. A helical membrane pass occupies residues 377–397 (FFYEAFLFLHIVLGALFFYTC). Histidine 386 is a binding site for heme. Position 398 (tryptophan 398) is a topological domain, extracellular. The helical transmembrane segment at 399-419 (EHVVELSGIEWIYAAIAIWTI) threads the bilayer. Histidine 400 serves as a coordination point for heme. Residues 415–534 (AIWTIDRLIR…EGPYGSSSPV (120 aa)) form the FAD-binding FR-type domain. The Cytoplasmic portion of the chain corresponds to 420 to 711 (DRLIRIVRVS…IEYFEEYQSW (292 aa)). 479-485 (HPFTVLD) provides a ligand contact to FAD. Residues 526 to 529 (GPYG) and 677 to 678 (CG) each bind NADP(+).

The protein belongs to the ferric reductase (FRE) family. It depends on FAD as a cofactor. Requires heme as cofactor.

It is found in the cell membrane. It catalyses the reaction 2 a Fe(II)-siderophore + NADP(+) + H(+) = 2 a Fe(III)-siderophore + NADPH. Functionally, siderophore-iron reductase responsible for reducing extracellular iron prior to import. Catalyzes the reductive uptake of Fe(3+) bound to di- and trihydroxamate siderophores. Fe(3+) is reduced to Fe(2+), which then dissociates from the siderophore and can be imported by the high-affinity Fe(2+) transport complex in the plasma membrane. The protein is Ferric reductase transmembrane component 3 (FRE3) of Saccharomyces cerevisiae (strain ATCC 204508 / S288c) (Baker's yeast).